The following is a 712-amino-acid chain: Polyribonucleotide nucleotidyltransferase (712 aa).

Aspartate 487 and aspartate 493 together coordinate Mg(2+). A KH domain is found at proline 554–isoleucine 613. One can recognise an S1 motif domain in the interval glycine 623 to lysine 691.

It belongs to the polyribonucleotide nucleotidyltransferase family. Requires Mg(2+) as cofactor.

The protein resides in the cytoplasm. It catalyses the reaction RNA(n+1) + phosphate = RNA(n) + a ribonucleoside 5'-diphosphate. Its function is as follows. Involved in mRNA degradation. Catalyzes the phosphorolysis of single-stranded polyribonucleotides processively in the 3'- to 5'-direction. The polypeptide is Polyribonucleotide nucleotidyltransferase (Rhizobium johnstonii (strain DSM 114642 / LMG 32736 / 3841) (Rhizobium leguminosarum bv. viciae)).